The primary structure comprises 330 residues: Methionyl-tRNA formyltransferase (330 aa).

112-115 (SLLP) provides a ligand contact to (6S)-5,6,7,8-tetrahydrofolate.

It belongs to the Fmt family.

The catalysed reaction is L-methionyl-tRNA(fMet) + (6R)-10-formyltetrahydrofolate = N-formyl-L-methionyl-tRNA(fMet) + (6S)-5,6,7,8-tetrahydrofolate + H(+). In terms of biological role, attaches a formyl group to the free amino group of methionyl-tRNA(fMet). The formyl group appears to play a dual role in the initiator identity of N-formylmethionyl-tRNA by promoting its recognition by IF2 and preventing the misappropriation of this tRNA by the elongation apparatus. This is Methionyl-tRNA formyltransferase from Alcanivorax borkumensis (strain ATCC 700651 / DSM 11573 / NCIMB 13689 / SK2).